Reading from the N-terminus, the 541-residue chain is Chaperonin GroEL 2 (541 aa).

Residues 29-32 (TLGP), 86-90 (DGTTT), Gly-413, 477-479 (NAA), and Asp-493 each bind ATP.

The protein belongs to the chaperonin (HSP60) family. Forms a cylinder of 14 subunits composed of two heptameric rings stacked back-to-back. Interacts with the co-chaperonin GroES.

The protein localises to the cytoplasm. The catalysed reaction is ATP + H2O + a folded polypeptide = ADP + phosphate + an unfolded polypeptide.. Together with its co-chaperonin GroES, plays an essential role in assisting protein folding. The GroEL-GroES system forms a nano-cage that allows encapsulation of the non-native substrate proteins and provides a physical environment optimized to promote and accelerate protein folding. The protein is Chaperonin GroEL 2 of Nocardioides sp. (strain ATCC BAA-499 / JS614).